The following is a 145-amino-acid chain: Transcriptional regulator SlyA (145 aa).

The HTH marR-type domain occupies 2-135 (ELPLGSDLAR…LALLVARLEK (134 aa)). A DNA-binding region (H-T-H motif) is located at residues 49–72 (QIQLAKAIGIEQPSLVRTLDQLEE).

This sequence belongs to the SlyA family. As to quaternary structure, homodimer.

Transcription regulator that can specifically activate or repress expression of target genes. The polypeptide is Transcriptional regulator SlyA (Pectobacterium atrosepticum (strain SCRI 1043 / ATCC BAA-672) (Erwinia carotovora subsp. atroseptica)).